The following is a 490-amino-acid chain: Ketol-acid reductoisomerase (NADP(+)) (490 aa).

A KARI N-terminal Rossmann domain is found at Ile-16–Ser-207. NADP(+) is bound by residues Cys-44–Gln-47, Lys-67, Ser-77, and Asp-107–Gln-109. His-131 is an active-site residue. Gly-157 is an NADP(+) binding site. KARI C-terminal knotted domains lie at Ser-208 to Val-343 and Tyr-344 to Met-483. Asp-216, Glu-220, Glu-388, and Glu-392 together coordinate Mg(2+). Ser-413 provides a ligand contact to substrate.

It belongs to the ketol-acid reductoisomerase family. Mg(2+) is required as a cofactor.

It catalyses the reaction (2R)-2,3-dihydroxy-3-methylbutanoate + NADP(+) = (2S)-2-acetolactate + NADPH + H(+). The enzyme catalyses (2R,3R)-2,3-dihydroxy-3-methylpentanoate + NADP(+) = (S)-2-ethyl-2-hydroxy-3-oxobutanoate + NADPH + H(+). It functions in the pathway amino-acid biosynthesis; L-isoleucine biosynthesis; L-isoleucine from 2-oxobutanoate: step 2/4. The protein operates within amino-acid biosynthesis; L-valine biosynthesis; L-valine from pyruvate: step 2/4. Functionally, involved in the biosynthesis of branched-chain amino acids (BCAA). Catalyzes an alkyl-migration followed by a ketol-acid reduction of (S)-2-acetolactate (S2AL) to yield (R)-2,3-dihydroxy-isovalerate. In the isomerase reaction, S2AL is rearranged via a Mg-dependent methyl migration to produce 3-hydroxy-3-methyl-2-ketobutyrate (HMKB). In the reductase reaction, this 2-ketoacid undergoes a metal-dependent reduction by NADPH to yield (R)-2,3-dihydroxy-isovalerate. In Buchnera aphidicola subsp. Acyrthosiphon pisum (strain 5A), this protein is Ketol-acid reductoisomerase (NADP(+)).